A 72-amino-acid chain; its full sequence is Keratin-associated protein 19-5 (72 aa).

It belongs to the KRTAP type 19 family. Interacts with hair keratins.

In terms of biological role, in the hair cortex, hair keratin intermediate filaments are embedded in an interfilamentous matrix, consisting of hair keratin-associated proteins (KRTAP), which are essential for the formation of a rigid and resistant hair shaft through their extensive disulfide bond cross-linking with abundant cysteine residues of hair keratins. The matrix proteins include the high-sulfur and high-glycine-tyrosine keratins. The protein is Keratin-associated protein 19-5 (KRTAP19-5) of Homo sapiens (Human).